Reading from the N-terminus, the 614-residue chain is V-type proton ATPase catalytic subunit A (614 aa).

247–254 (GAFGCGKT) serves as a coordination point for ATP.

The protein belongs to the ATPase alpha/beta chains family. V-ATPase is a heteromultimeric enzyme made up of two complexes: the ATP-hydrolytic V1 complex and the proton translocation V0 complex. The V1 complex consists of three catalytic AB heterodimers that form a heterohexamer, three peripheral stalks each consisting of EG heterodimers, one central rotor including subunits D and F, and the regulatory subunits C and H. The proton translocation complex V0 consists of the proton transport subunit a, a ring of proteolipid subunits c9c'', rotary subunit d, subunits e and f, and the accessory subunits VhaAC45 and ATP6AP2.

The catalysed reaction is ATP + H2O + 4 H(+)(in) = ADP + phosphate + 5 H(+)(out). Its activity is regulated as follows. ATP hydrolysis occurs at the interface between the nucleotide-binding domains of subunits A and B. ATP hydrolysis triggers a conformational change in the subunits D and F, which induces a shift of subunit d. The c-ring is subsequently rotated and results in a continuous proton translocation across the membrane. Its function is as follows. Catalytic subunit of the V1 complex of vacuolar(H+)-ATPase (V-ATPase), a multisubunit enzyme composed of a peripheral complex (V1) that hydrolyzes ATP and a membrane integral complex (V0) that translocates protons. V-ATPase is responsible for acidifying and maintaining the pH of intracellular compartments and in some cell types, is targeted to the plasma membrane, where it is responsible for acidifying the extracellular environment. The chain is V-type proton ATPase catalytic subunit A from Anopheles gambiae (African malaria mosquito).